The sequence spans 256 residues: DNA repair protein RecO (256 aa).

The protein belongs to the RecO family.

Functionally, involved in DNA repair and RecF pathway recombination. The chain is DNA repair protein RecO from Clostridium novyi (strain NT).